Here is a 68-residue protein sequence, read N- to C-terminus: MVTVAELQALRQARLDLLTGKRVVSVQKDGRRIEYTAASLDELNRAINDAESVLGTTRCRRRPLGVRL.

Belongs to the lambda phage gpW family.

The chain is P21 prophage-derived head-stabilizing protein from Escherichia coli O6:H1 (strain CFT073 / ATCC 700928 / UPEC).